The chain runs to 298 residues: Cyclic dof factor 1 (298 aa).

Positions 27 to 46 are disordered; sequence EEEEKNQNKTLTDQSEKDKT. The Dof-type zinc-finger motif lies at 54–108; it reads LPCPRCNSMETKFCYYNNYNVNQPRHFCKACQRYWTSGGTMRSVPIGAGRRKNKN. 4 residues coordinate Zn(2+): Cys56, Cys59, Cys81, and Cys84. The disordered stretch occupies residues 200 to 231; the sequence is SSSPTSTLGKHSRDEDETVKQKQRNGSVLVPK. Positions 210–219 are enriched in basic and acidic residues; the sequence is HSRDEDETVK.

As to quaternary structure, interacts with ADO2 (via kelch repeats), ADO3 (via kelch repeats) and GI (via N-terminus). Ubiquitinated. In terms of tissue distribution, expressed in the vascular tissues of cotyledons, leaves and hypocotyls and in stomata. Not detected in roots.

It is found in the nucleus. In terms of biological role, transcription factor that binds specifically to a 5'-AA[AG]G-3' consensus core sequence. A flanking TGT sequence contributes to the specificity of binding. Regulates a photoperiodic flowering response. Transcriptional repressor of 'CONSTANS' expression. The DNA-binding ability is not modulated by 'GIGANTEA' but the stability of CDF1 is controlled by the proteasome-dependent pathway. Ubiquitinated by the SCF(ADO3) E3 ubiquitin ligase complex. Binds to the FT promoter in the morning. The protein is Cyclic dof factor 1 (CDF1) of Arabidopsis thaliana (Mouse-ear cress).